The following is a 367-amino-acid chain: Phosphoribosylaminoimidazole-succinocarboxamide synthase (367 aa).

This sequence belongs to the SAICAR synthetase family.

It catalyses the reaction 5-amino-1-(5-phospho-D-ribosyl)imidazole-4-carboxylate + L-aspartate + ATP = (2S)-2-[5-amino-1-(5-phospho-beta-D-ribosyl)imidazole-4-carboxamido]succinate + ADP + phosphate + 2 H(+). Its pathway is purine metabolism; IMP biosynthesis via de novo pathway; 5-amino-1-(5-phospho-D-ribosyl)imidazole-4-carboxamide from 5-amino-1-(5-phospho-D-ribosyl)imidazole-4-carboxylate: step 1/2. This is Phosphoribosylaminoimidazole-succinocarboxamide synthase from Shewanella baltica (strain OS185).